A 134-amino-acid chain; its full sequence is Tripartite terminase subunit 2 (134 aa).

It belongs to the herpesviridae TRM2 protein family. As to quaternary structure, associates with TRM1 and TRM3 to form the tripartite terminase complex.

It is found in the host nucleus. Functionally, component of the molecular motor that translocates viral genomic DNA in empty capsid during DNA packaging. Forms a tripartite terminase complex together with TRM1 and TRM3 in the host cytoplasm. Once the complex reaches the host nucleus, it interacts with the capsid portal vertex. This portal forms a ring in which genomic DNA is translocated into the capsid. The sequence is that of Tripartite terminase subunit 2 from Gallus gallus (Chicken).